Consider the following 525-residue polypeptide: Erythropoietin receptor (525 aa).

Residues 1-32 (MGAPSSLLFSTAHWRTVPFLLAFWVLLSTGTA) form the signal peptide. The Extracellular portion of the chain corresponds to 33–249 (EDPTMTPEFL…TIATIIDLRL (217 aa)). The cysteines at positions 58 and 68 are disulfide-linked. N-linked (GlcNAc...) asparagine glycans are attached at residues Asn77, Asn100, Asn149, and Asn185. A disulfide bond links Cys91 and Cys107. Positions 146–246 (PPLNVTVKEK…APITIATIID (101 aa)) constitute a Fibronectin type-III domain. A WSXWS motif motif is present at residues 232–236 (WSDWT). Residues 250–270 (LLLLSIAIFVALIAGVGVYIF) form a helical membrane-spanning segment. The Cytoplasmic segment spans residues 271-525 (MRHGMYLKHK…NFLAPIYSQS (255 aa)). The short motif at 281 to 289 (VWPQVPTPE) is the Box 1 motif element. 2 disordered regions span residues 434–459 (APRM…QSIP) and 492–513 (LDMS…QNSP). The span at 447-459 (ENSVSSDGKQSIP) shows a compositional bias: polar residues. An ITIM motif motif is present at residues 487–492 (LKYAYL).

This sequence belongs to the type I cytokine receptor family. Type 1 subfamily. In terms of tissue distribution, expressed in the ventral blood island from stage 28 through to stage 36. Expressed in the circulating blood by stage 40. In the adult, highly expressed in peripheral blood cells including immature erythrocytes and basophils, and moderately expressed in the hematopoietic organs: liver, kidney and spleen. Expressed at a low level in adult brain.

The protein resides in the cell membrane. Functionally, receptor for erythropoietin. Mediates erythropoietin-induced erythroblast proliferation and differentiation. This is Erythropoietin receptor from Xenopus laevis (African clawed frog).